The following is a 209-amino-acid chain: Large ribosomal subunit protein bL25 (209 aa).

It belongs to the bacterial ribosomal protein bL25 family. CTC subfamily. Part of the 50S ribosomal subunit; part of the 5S rRNA/L5/L18/L25 subcomplex. Contacts the 5S rRNA. Binds to the 5S rRNA independently of L5 and L18.

Functionally, this is one of the proteins that binds to the 5S RNA in the ribosome where it forms part of the central protuberance. This is Large ribosomal subunit protein bL25 from Xanthomonas campestris pv. campestris (strain B100).